A 222-amino-acid chain; its full sequence is Ribosomal RNA large subunit methyltransferase E (222 aa).

5 residues coordinate S-adenosyl-L-methionine: Gly-64, Trp-66, Asp-92, Asp-108, and Asp-133. The active-site Proton acceptor is the Lys-173.

Belongs to the class I-like SAM-binding methyltransferase superfamily. RNA methyltransferase RlmE family.

The protein resides in the cytoplasm. It carries out the reaction uridine(2552) in 23S rRNA + S-adenosyl-L-methionine = 2'-O-methyluridine(2552) in 23S rRNA + S-adenosyl-L-homocysteine + H(+). Its function is as follows. Specifically methylates the uridine in position 2552 of 23S rRNA at the 2'-O position of the ribose in the fully assembled 50S ribosomal subunit. The protein is Ribosomal RNA large subunit methyltransferase E of Variovorax paradoxus (strain S110).